Reading from the N-terminus, the 1279-residue chain is Talin-A (1279 aa).

Residues 84 to 365 (RPQKFKLLDG…GYIEIIMKAR (282 aa)) enclose the FERM domain.

The protein resides in the cytoplasm. Its subcellular location is the cytoskeleton. The protein localises to the cell cortex. In terms of biological role, actin-binding protein that may be involved in the control of cell motility and chemotaxis. In Dictyostelium discoideum (Social amoeba), this protein is Talin-A (talA).